The primary structure comprises 292 residues: Non-homologous end joining protein Ku (292 aa).

In terms of domain architecture, Ku spans 9 to 187 (ITFGLVNVPV…TVPPITEREL (179 aa)). Residues 264–285 (AASAFPAAEKAPAGKNAATASA) show a composition bias toward low complexity. The segment at 264 to 292 (AASAFPAAEKAPAGKNAATASAKKARKLA) is disordered.

Belongs to the prokaryotic Ku family. In terms of assembly, homodimer. Interacts with LigD.

In terms of biological role, with LigD forms a non-homologous end joining (NHEJ) DNA repair enzyme, which repairs dsDNA breaks with reduced fidelity. Binds linear dsDNA with 5'- and 3'- overhangs but not closed circular dsDNA nor ssDNA. Recruits and stimulates the ligase activity of LigD. In Leifsonia xyli subsp. xyli (strain CTCB07), this protein is Non-homologous end joining protein Ku.